A 153-amino-acid polypeptide reads, in one-letter code: Deoxyuridine 5'-triphosphate nucleotidohydrolase (153 aa).

Residues arginine 65–glycine 67, asparagine 78, and threonine 82–aspartate 84 each bind substrate. The interval methionine 132 to histidine 153 is disordered.

The protein belongs to the dUTPase family. Mg(2+) is required as a cofactor.

It catalyses the reaction dUTP + H2O = dUMP + diphosphate + H(+). The protein operates within pyrimidine metabolism; dUMP biosynthesis; dUMP from dCTP (dUTP route): step 2/2. Its function is as follows. This enzyme is involved in nucleotide metabolism: it produces dUMP, the immediate precursor of thymidine nucleotides and it decreases the intracellular concentration of dUTP so that uracil cannot be incorporated into DNA. The polypeptide is Deoxyuridine 5'-triphosphate nucleotidohydrolase (Chlorobium limicola (strain DSM 245 / NBRC 103803 / 6330)).